The primary structure comprises 312 residues: Oxidoreductase NAD-binding domain-containing protein 1 (312 aa).

The first 17 residues, M1–G17, serve as a signal peptide directing secretion. An FAD-binding FR-type domain is found at H50 to S186. G178–P183 contributes to the NAD(+) binding site.

The protein is Oxidoreductase NAD-binding domain-containing protein 1 (OXNAD1) of Homo sapiens (Human).